The sequence spans 346 residues: Holliday junction branch migration complex subunit RuvB (346 aa).

Positions 1–182 are large ATPase domain (RuvB-L); the sequence is MSEAARLIAP…FGIPVRLNFY (182 aa). Residues Arg22, Gly63, Lys66, Thr67, Thr68, 129 to 131, Arg172, Tyr182, and Arg219 each bind ATP; that span reads EDF. Thr67 is a binding site for Mg(2+). A small ATPAse domain (RuvB-S) region spans residues 183 to 253; it reads TVEELELIVR…IADEALTRLL (71 aa). Residues 256 to 346 form a head domain (RuvB-H) region; the sequence is SMGLDQLDRR…SQFRLTLEDD (91 aa). Residues Arg292, Arg311, and Arg316 each contribute to the DNA site.

It belongs to the RuvB family. In terms of assembly, homohexamer. Forms an RuvA(8)-RuvB(12)-Holliday junction (HJ) complex. HJ DNA is sandwiched between 2 RuvA tetramers; dsDNA enters through RuvA and exits via RuvB. An RuvB hexamer assembles on each DNA strand where it exits the tetramer. Each RuvB hexamer is contacted by two RuvA subunits (via domain III) on 2 adjacent RuvB subunits; this complex drives branch migration. In the full resolvosome a probable DNA-RuvA(4)-RuvB(12)-RuvC(2) complex forms which resolves the HJ.

It is found in the cytoplasm. It catalyses the reaction ATP + H2O = ADP + phosphate + H(+). In terms of biological role, the RuvA-RuvB-RuvC complex processes Holliday junction (HJ) DNA during genetic recombination and DNA repair, while the RuvA-RuvB complex plays an important role in the rescue of blocked DNA replication forks via replication fork reversal (RFR). RuvA specifically binds to HJ cruciform DNA, conferring on it an open structure. The RuvB hexamer acts as an ATP-dependent pump, pulling dsDNA into and through the RuvAB complex. RuvB forms 2 homohexamers on either side of HJ DNA bound by 1 or 2 RuvA tetramers; 4 subunits per hexamer contact DNA at a time. Coordinated motions by a converter formed by DNA-disengaged RuvB subunits stimulates ATP hydrolysis and nucleotide exchange. Immobilization of the converter enables RuvB to convert the ATP-contained energy into a lever motion, pulling 2 nucleotides of DNA out of the RuvA tetramer per ATP hydrolyzed, thus driving DNA branch migration. The RuvB motors rotate together with the DNA substrate, which together with the progressing nucleotide cycle form the mechanistic basis for DNA recombination by continuous HJ branch migration. Branch migration allows RuvC to scan DNA until it finds its consensus sequence, where it cleaves and resolves cruciform DNA. This Rhizobium meliloti (strain 1021) (Ensifer meliloti) protein is Holliday junction branch migration complex subunit RuvB.